The following is an 833-amino-acid chain: MTRSPFRRLVFGTLRRLLYLWVRSETINQSSFTLNLDRSRPVFYALQSPSISDLAVIDTECRKAGLPRPVLSVAVGNLIEPAAFFYLTPAPDWLGRQDKRGAPPTLERLVAAVSQNPGEDAQIIPVSVFWGQSPDRESSAWKLLFADSWAVTGRLRRLVSILILGRKTRVQFSAPIHMRELVGENKGYELTLRMTQRLLRVHFRNLKSAVIGPDVSHRRTVVKGLLDEPLVKQAIIEEAERENITQDKARDRALSYGNEIASDYTYSVIRFMEVVLSWFWNKIYDGIKVSHIEGVQEVAPGHEVIYVPCHRSHIDYLLLSYLLFCNGLTPPHIAAGINLNMPVVGSLLRRGGAFFMRRTFKGNPLYTAVFTEYLHTLFIKGFPVEYFVEGGRSRTGRMLQPKTGMLAITLRSFLRNSRMPIVFVPLYIGYERVLEGRTYLGELRGATKKKESIFDIFKVIGALKQRFGQVSVNFGAPIKLAEFLDGEQPDWREQALAPQFRPEWLSETTHRLGERVAQHLNEAAAVNPMNLVAVALLSTQRLALDDQAMERVLDLYLTLLRAVPYSPHTTLPEGDGRSLIEHVKGMDLLAEQKDALGKILYLNEQNAVLMTYYRNNVLHIFALPSLLASFFQSSSRMSREQILRYTRALYPFLQSELFIRWPLSELDEVVDQWLAAFVEQGLLRFKKDVYVRPEPSSREFVLLTLLSRAIAQTLQRFYMAIALLLNSGQNTLSAEQLEDLCTVMAQRLSILHGLNAPEFFDKSLFRHFIQTLLDLGVLRKDSAGKLSYHPMLGELAEGAAKRVLPAEIRLSIRQVALHSNEEEQDAGNGEGVA.

An HXXXXD motif motif is present at residues 309 to 314; sequence CHRSHI.

This sequence belongs to the GPAT/DAPAT family.

The protein localises to the cell inner membrane. The catalysed reaction is sn-glycerol 3-phosphate + an acyl-CoA = a 1-acyl-sn-glycero-3-phosphate + CoA. Its pathway is phospholipid metabolism; CDP-diacylglycerol biosynthesis; CDP-diacylglycerol from sn-glycerol 3-phosphate: step 1/3. The protein is Glycerol-3-phosphate acyltransferase of Pseudomonas savastanoi pv. phaseolicola (strain 1448A / Race 6) (Pseudomonas syringae pv. phaseolicola (strain 1448A / Race 6)).